The chain runs to 499 residues: Aldehyde dehydrogenase 1 (499 aa).

Residues 164-166 (IPW), 164-167 (IPWN), 190-193 (KPAE), 223-224 (GS), 243-244 (GS), 243-248 (GSTKVG), and 266-268 (ELG) each bind NAD(+). The Proton acceptor role is filled by E266. The Nucleophile role is filled by C300. NAD(+) is bound by residues 346-350 (QQYEK) and 397-399 (EIF).

It belongs to the aldehyde dehydrogenase family. Homotetramer. Expressed in flowers and disk florets.

The catalysed reaction is an aldehyde + NAD(+) + H2O = a carboxylate + NADH + 2 H(+). It catalyses the reaction an aldehyde + NADP(+) + H2O = a carboxylate + NADPH + 2 H(+). The enzyme catalyses octanal + NADP(+) + H2O = octanoate + NADPH + 2 H(+). It carries out the reaction (1R,3R)-chrysanthemal + NAD(+) + H2O = (1R,3R)-chrysanthemate + NADH + 2 H(+). The catalysed reaction is (1R,3R)-chrysanthemal + NADP(+) + H2O = (1R,3R)-chrysanthemate + NADPH + 2 H(+). It catalyses the reaction (E)-hept-2-enal + NADP(+) + H2O = (E)-hept-2-enoate + NADPH + 2 H(+). The enzyme catalyses dodecanal + NADP(+) + H2O = dodecanoate + NADPH + 2 H(+). It carries out the reaction citral + NADP(+) + H2O = 3,7-dimethylocta-2,6-dienoate + NADPH + 2 H(+). The catalysed reaction is perillyl aldehyde + NADP(+) + H2O = perillate + NADPH + 2 H(+). It catalyses the reaction (2E,6E)-farnesal + NADP(+) + H2O = (2E,6E)-farnesoate + NADPH + 2 H(+). The enzyme catalyses (S)-(-)-citronellal + NADP(+) + H2O = (S)-(-)-citronellate + NADPH + 2 H(+). It participates in isoprenoid biosynthesis. Its function is as follows. Component of the monoterpenoid pyrethrins biosynthesis; pyrethrins are widely used plant-derived pesticide. Mediates the conversion of trans-chrysanthemal into trans-chrysanthemic acid. Can also use octanal, hept-2-enal, dodecanal, citral, farnesal, citronellal and perillyl aldehyde as substrates. The polypeptide is Aldehyde dehydrogenase 1 (Tanacetum cinerariifolium (Dalmatian daisy)).